A 440-amino-acid chain; its full sequence is Probable exopolygalacturonase C (440 aa).

An N-terminal signal peptide occupies residues 1 to 21; sequence MLITNPALLGILASLAPLALG. 4 N-linked (GlcNAc...) asparagine glycosylation sites follow: Asn24, Asn84, Asn151, and Asn219. PbH1 repeat units follow at residues 217–238 and 240–261; these read GTNI…AVNT and SHNI…SIGS. The active-site Proton donor is Asp231. His255 is an active-site residue. A glycan (N-linked (GlcNAc...) asparagine) is linked at Asn271. A PbH1 3 repeat occupies 272-293; it reads ITNLRFEDVTVIDALYAARFKS. 2 N-linked (GlcNAc...) asparagine glycosylation sites follow: Asn313 and Asn350. Cys389 and Cys395 form a disulfide bridge. A glycan (N-linked (GlcNAc...) asparagine) is linked at Asn434.

This sequence belongs to the glycosyl hydrolase 28 family.

The protein localises to the secreted. It carries out the reaction [(1-&gt;4)-alpha-D-galacturonosyl](n) + H2O = alpha-D-galacturonate + [(1-&gt;4)-alpha-D-galacturonosyl](n-1). Its function is as follows. Specific in hydrolyzing the terminal glycosidic bond of polygalacturonic acid and oligogalacturonates. In Neosartorya fischeri (strain ATCC 1020 / DSM 3700 / CBS 544.65 / FGSC A1164 / JCM 1740 / NRRL 181 / WB 181) (Aspergillus fischerianus), this protein is Probable exopolygalacturonase C (pgxC).